The chain runs to 87 residues: Small ribosomal subunit protein uS15 (87 aa).

Belongs to the universal ribosomal protein uS15 family. Part of the 30S ribosomal subunit. Forms a bridge to the 50S subunit in the 70S ribosome, contacting the 23S rRNA.

Functionally, one of the primary rRNA binding proteins, it binds directly to 16S rRNA where it helps nucleate assembly of the platform of the 30S subunit by binding and bridging several RNA helices of the 16S rRNA. In terms of biological role, forms an intersubunit bridge (bridge B4) with the 23S rRNA of the 50S subunit in the ribosome. The protein is Small ribosomal subunit protein uS15 of Clostridium perfringens (strain ATCC 13124 / DSM 756 / JCM 1290 / NCIMB 6125 / NCTC 8237 / Type A).